Here is a 498-residue protein sequence, read N- to C-terminus: Osteoclast stimulatory transmembrane protein (498 aa).

Residues 1-51 (MRTIRAATEHLFGLGWKFWRLGICKAVVPLQAAWKAFSQPVPASCNELLTQ) lie on the Cytoplasmic side of the membrane. The helical transmembrane segment at 52 to 72 (LLLCVSLASLIAGLAHHWLVS) threads the bilayer. The Extracellular portion of the chain corresponds to 73–81 (LQLYPLGPP). A helical membrane pass occupies residues 82 to 102 (ALVTSLCGLFVFLSLGLVPPI). At 103-121 (RCLFVLSVPTLGSKQGRRL) the chain is on the cytoplasmic side. Residues 122–142 (LLSYSAANLAVAVVPNVLGNV) form a helical membrane-spanning segment. The Extracellular segment spans residues 143–226 (RAAGQVLSCV…LARAALGTQR (84 aa)). The chain crosses the membrane as a helical span at residues 227-247 (VVTGLFLLGLLGESAWYLHRY). At 248–303 (LTDLRFDNIYATRQLVRQLAQAGATHLLTSPPPWLLQTAQPKLSREELLSCLLRLG) the chain is on the cytoplasmic side. A helical membrane pass occupies residues 304–324 (LLALLLVATAVTVASDYGAFL). Residues 325-401 (LAQAAVAWAQ…QAQPPRVTAA (77 aa)) lie on the Extracellular side of the membrane. Residues 402-422 (LAAGALQLLAGATLVLQAYAW) form a helical membrane-spanning segment. Topologically, residues 423 to 498 (RLRHTIAASF…DSLGPPYDLE (76 aa)) are cytoplasmic. The segment at 449-498 (QRRHNQSDHLNKQPGTMATRESRKPGQGTRTLESQGPQAHDSLGPPYDLE) is disordered. Polar residues predominate over residues 476 to 485 (GTRTLESQGP).

Expressed in osteoclast (at protein level). Ubiquitous. Highly expressed in multi-nuclear osteoclast cells compared to mono-nuclear macrophages. Expressed in foreign body giant cells (FBGCs).

Its subcellular location is the membrane. Probable cell surface receptor that plays a role in cellular fusion and cell differentiation. Cooperates with DCSTAMP in modulating cell-cell fusion in both osteoclasts and foreign body giant cells (FBGCs). Involved in osteoclast bone resorption. Promotes osteoclast differentiation and may play a role in the multinucleated osteoclast maturation. In Mus musculus (Mouse), this protein is Osteoclast stimulatory transmembrane protein (Ocstamp).